The following is a 187-amino-acid chain: Elongation factor P (187 aa).

It belongs to the elongation factor P family.

The protein resides in the cytoplasm. The protein operates within protein biosynthesis; polypeptide chain elongation. Functionally, involved in peptide bond synthesis. Stimulates efficient translation and peptide-bond synthesis on native or reconstituted 70S ribosomes in vitro. Probably functions indirectly by altering the affinity of the ribosome for aminoacyl-tRNA, thus increasing their reactivity as acceptors for peptidyl transferase. This is Elongation factor P from Roseiflexus castenholzii (strain DSM 13941 / HLO8).